Consider the following 243-residue polypeptide: UPF0246 protein gbs2036 (243 aa).

It belongs to the UPF0246 family.

The chain is UPF0246 protein gbs2036 from Streptococcus agalactiae serotype III (strain NEM316).